The chain runs to 151 residues: Small ribosomal subunit protein bS6 (151 aa).

The tract at residues 96-151 (HEEGQSAMLTRRDDRRERDGDDRPRRREGGFDRGDRGDRGDRGPRRPRDNEAGEGA) is disordered.

It belongs to the bacterial ribosomal protein bS6 family.

Its function is as follows. Binds together with bS18 to 16S ribosomal RNA. The polypeptide is Small ribosomal subunit protein bS6 (Brucella anthropi (strain ATCC 49188 / DSM 6882 / CCUG 24695 / JCM 21032 / LMG 3331 / NBRC 15819 / NCTC 12168 / Alc 37) (Ochrobactrum anthropi)).